Consider the following 713-residue polypeptide: Cyclomaltodextrin glucanotransferase (713 aa).

The first 27 residues, 1–27 (MKRFMKLTAVWTLWLSLTLGLLSPVHA), serve as a signal peptide directing secretion. The segment at 28-165 (APDTSVSNKQ…NIKVIIDFAP (138 aa)) is A1. 4 residues coordinate Ca(2+): D54, N56, N59, and N60. Residues C70 and C77 are joined by a disulfide bond. Ca(2+)-binding residues include G78 and D80. A substrate-binding site is contributed by 127–128 (YW). N166 lines the Ca(2+) pocket. A b region spans residues 166–229 (NHTSPASSDD…NLYDLADLNH (64 aa)). H167 is a substrate binding site. Residue I217 coordinates Ca(2+). Substrate is bound at residue 220-223 (NLYD). Position 226 (D226) interacts with Ca(2+). The segment at 230–433 (NNSSVDVYLK…LRKSNPAIAY (204 aa)) is A2. Position 254 (R254) interacts with substrate. D256 functions as the Nucleophile in the catalytic mechanism. 259–260 (KH) contacts substrate. Position 260 (H260) interacts with Ca(2+). E284 (proton donor) is an active-site residue. 3 residues coordinate substrate: H354, D398, and R402. Positions 434–522 (GSTHERWINN…GTAVWQYTTD (89 aa)) are c. Residues 523-609 (ATTPIIGNVG…SNIYDNFEVL (87 aa)) are d. The IPT/TIG domain maps to 526–607 (PIIGNVGPMM…AASNIYDNFE (82 aa)). The CBM20 domain maps to 608-713 (VLTGDQVTVR…TATVNVNWQP (106 aa)). Residues 610-713 (TGDQVTVRFV…TATVNVNWQP (104 aa)) are e.

The protein belongs to the glycosyl hydrolase 13 family. Monomer. Ca(2+) is required as a cofactor.

It localises to the secreted. It catalyses the reaction Cyclizes part of a (1-&gt;4)-alpha-D-glucan chain by formation of a (1-&gt;4)-alpha-D-glucosidic bond.. The sequence is that of Cyclomaltodextrin glucanotransferase (cgt) from Bacillus sp. (strain 1011).